A 359-amino-acid chain; its full sequence is Peptide chain release factor 1 (359 aa).

Gln-235 carries the N5-methylglutamine modification. The disordered stretch occupies residues 283–309; that stretch reads QKAESERSQARRSQVGSGDRSERIRTY.

This sequence belongs to the prokaryotic/mitochondrial release factor family. Methylated by PrmC. Methylation increases the termination efficiency of RF1.

The protein localises to the cytoplasm. Its function is as follows. Peptide chain release factor 1 directs the termination of translation in response to the peptide chain termination codons UAG and UAA. The protein is Peptide chain release factor 1 of Brucella suis (strain ATCC 23445 / NCTC 10510).